Here is a 562-residue protein sequence, read N- to C-terminus: T-complex protein 1 subunit epsilon (562 aa).

It belongs to the TCP-1 chaperonin family. Heterooligomeric complex of about 850 to 900 kDa that forms two stacked rings, 12 to 16 nm in diameter.

The protein localises to the cytoplasm. Its function is as follows. Molecular chaperone; assists the folding of proteins upon ATP hydrolysis. Known to play a role, in vitro, in the folding of actin and tubulin. In yeast may play a role in mitotic spindle formation. The sequence is that of T-complex protein 1 subunit epsilon (CCT5) from Saccharomyces cerevisiae (strain ATCC 204508 / S288c) (Baker's yeast).